Consider the following 878-residue polypeptide: Indoleacetate decarboxylase (878 aa).

Positions 42-750 (DRTKRMKERF…VTGATPDGRL (709 aa)) constitute a PFL domain. The active-site Cysteine radical intermediate is Cys-500. Catalysis depends on Glu-502, which acts as the Proton acceptor. The 121-residue stretch at 758–878 (GILSASPGTD…VIARTEYDAL (121 aa)) folds into the Glycine radical domain. Gly-853 carries the glycine radical modification.

The protein belongs to the glycyl radical enzyme (GRE) family. In terms of assembly, homodimer (predominantly) and monomer. Post-translationally, requires the activating protein OsIADAE to generate the key active site glycyl radical on Gly-853 that is involved in catalysis.

The catalysed reaction is (indol-3-yl)acetate + H(+) = skatole + CO2. The protein operates within amino-acid degradation. In terms of biological role, glycyl radical enzyme that catalyzes the terminal step of tryptophan fermentation, the decarboxylation of indoleacetate to form skatole, a malodorous compound that contributes to the characteristic smell of animal feces. No activity is detected with phenylacetate or p-hydroxyphenylacetate as substrates, indicating high substrate specificity. The protein is Indoleacetate decarboxylase of Tractidigestivibacter scatoligenes (Olsenella scatoligenes).